A 419-amino-acid chain; its full sequence is Gamma-glutamyl phosphate reductase (419 aa).

Belongs to the gamma-glutamyl phosphate reductase family.

It localises to the cytoplasm. It catalyses the reaction L-glutamate 5-semialdehyde + phosphate + NADP(+) = L-glutamyl 5-phosphate + NADPH + H(+). Its pathway is amino-acid biosynthesis; L-proline biosynthesis; L-glutamate 5-semialdehyde from L-glutamate: step 2/2. Its function is as follows. Catalyzes the NADPH-dependent reduction of L-glutamate 5-phosphate into L-glutamate 5-semialdehyde and phosphate. The product spontaneously undergoes cyclization to form 1-pyrroline-5-carboxylate. In Yersinia pseudotuberculosis serotype O:1b (strain IP 31758), this protein is Gamma-glutamyl phosphate reductase.